The sequence spans 198 residues: Angiopoietin-like protein 8 (198 aa).

Residues 1–21 (MPVPALCLLWALAMVTRPASA) form the signal peptide.

It belongs to the ANGPTL8 family. Interacts with ANGPTL3. Post-translationally, proteolytically cleaved at the N-terminus. Predominantly expressed in liver. Also expressed in adipose tissues.

Its subcellular location is the secreted. Hormone that acts as a blood lipid regulator by regulating serum triglyceride levels. May be involved in the metabolic transition between fasting and refeeding: required to direct fatty acids to adipose tissue for storage in the fed state. This chain is Angiopoietin-like protein 8, found in Homo sapiens (Human).